A 247-amino-acid chain; its full sequence is Carboxy-S-adenosyl-L-methionine synthase (247 aa).

S-adenosyl-L-methionine contacts are provided by residues tyrosine 40, 65–67, 90–91, 122–123, asparagine 137, and arginine 204; these read GSS, DN, and DI.

This sequence belongs to the class I-like SAM-binding methyltransferase superfamily. Cx-SAM synthase family. Homodimer.

The enzyme catalyses prephenate + S-adenosyl-L-methionine = carboxy-S-adenosyl-L-methionine + 3-phenylpyruvate + H2O. In terms of biological role, catalyzes the conversion of S-adenosyl-L-methionine (SAM) to carboxy-S-adenosyl-L-methionine (Cx-SAM). The polypeptide is Carboxy-S-adenosyl-L-methionine synthase (Pseudomonas syringae pv. syringae (strain B728a)).